The chain runs to 367 residues: Probable sugar phosphate/phosphate translocator At1g48230 (367 aa).

The next 10 helical transmembrane spans lie at 9-29 (LVLT…VILY), 43-63 (LPIT…FLLI), 76-96 (FEIY…SLWF), 106-126 (VAFI…MAVV), 140-160 (MVLV…FNVI), 163-183 (VYQV…QVLL), 193-213 (VTSL…PWYV), 229-249 (WIFF…FLVI), 257-276 (IRVA…TVIF), and 280-302 (TITG…YNYI). The segment covering 321–330 (ITKDWKEKNS) has biased composition (basic and acidic residues). The disordered stretch occupies residues 321–341 (ITKDWKEKNSSDGGSPRGLEL).

It belongs to the TPT transporter family. TPT (TC 2.A.7.9) subfamily.

The protein resides in the membrane. The sequence is that of Probable sugar phosphate/phosphate translocator At1g48230 from Arabidopsis thaliana (Mouse-ear cress).